A 61-amino-acid chain; its full sequence is Small ribosomal subunit protein uS14B (61 aa).

Zn(2+)-binding residues include Cys24, Cys27, Cys40, and Cys43.

The protein belongs to the universal ribosomal protein uS14 family. Zinc-binding uS14 subfamily. In terms of assembly, part of the 30S ribosomal subunit. Contacts proteins S3 and S10. Zn(2+) is required as a cofactor.

Functionally, binds 16S rRNA, required for the assembly of 30S particles and may also be responsible for determining the conformation of the 16S rRNA at the A site. In Saccharopolyspora erythraea (strain ATCC 11635 / DSM 40517 / JCM 4748 / NBRC 13426 / NCIMB 8594 / NRRL 2338), this protein is Small ribosomal subunit protein uS14B.